Reading from the N-terminus, the 164-residue chain is Diphosphoinositol polyphosphate phosphohydrolase 3-alpha (164 aa).

Substrate is bound by residues arginine 9, 17-19, and 38-40; these read KKR and SSR. The 128-residue stretch at 17 to 144 folds into the Nudix hydrolase domain; that stretch reads KKRAACLCFR…VHAEYLEKLK (128 aa). Residues glycine 49 and glutamate 65 each coordinate Mg(2+). Residues 50–71 carry the Nudix box motif; that stretch reads GGMEPEEEPDGAAVREVYEEAG. The active-site Proton acceptor is the glutamate 68. Glutamate 69 lines the Mg(2+) pocket. Substrate contacts are provided by residues 89–91, arginine 115, and lysine 133; that span reads RKH. Positions 144-164 are disordered; it reads KLGGSPTNGNSAAPSPPESEP.

This sequence belongs to the Nudix hydrolase family. DIPP subfamily. The cofactor is Mg(2+). Mn(2+) is required as a cofactor. As to expression, mainly expressed in testis, liver kidney and, at lower level, in heart, brain, spleen, lung and skeletal muscle.

It is found in the cytoplasm. It catalyses the reaction diphospho-myo-inositol polyphosphate + H2O = myo-inositol polyphosphate + phosphate.. It carries out the reaction P(1),P(6)-bis(5'-adenosyl) hexaphosphate + H2O = adenosine 5'-pentaphosphate + AMP + 2 H(+). The catalysed reaction is P(1),P(5)-bis(5'-adenosyl) pentaphosphate + H2O = adenosine 5'-tetraphosphate + AMP + 2 H(+). Its function is as follows. Cleaves a beta-phosphate from the diphosphate groups in PP-InsP5 (diphosphoinositol pentakisphosphate), suggesting that it may play a role in signal transduction. Also able to catalyze the hydrolysis of dinucleoside oligophosphates, with Ap6A and Ap5A being the preferred substrates. The major reaction products are ADP and p4a from Ap6A and ADP and ATP from Ap5A. Also able to hydrolyze 5-phosphoribose 1-diphosphate; however, the relevance of such activity in vivo remains unclear. This chain is Diphosphoinositol polyphosphate phosphohydrolase 3-alpha, found in Mus musculus (Mouse).